A 199-amino-acid chain; its full sequence is ATP-dependent Clp protease proteolytic subunit (199 aa).

Positions 1 to 23 (MTTSAARKGLRTRGSACPRATRS) are disordered. Catalysis depends on S100, which acts as the Nucleophile. H125 is a catalytic residue.

Belongs to the peptidase S14 family. Fourteen ClpP subunits assemble into 2 heptameric rings which stack back to back to give a disk-like structure with a central cavity, resembling the structure of eukaryotic proteasomes.

It is found in the cytoplasm. It catalyses the reaction Hydrolysis of proteins to small peptides in the presence of ATP and magnesium. alpha-casein is the usual test substrate. In the absence of ATP, only oligopeptides shorter than five residues are hydrolyzed (such as succinyl-Leu-Tyr-|-NHMec, and Leu-Tyr-Leu-|-Tyr-Trp, in which cleavage of the -Tyr-|-Leu- and -Tyr-|-Trp bonds also occurs).. Cleaves peptides in various proteins in a process that requires ATP hydrolysis. Has a chymotrypsin-like activity. Plays a major role in the degradation of misfolded proteins. The sequence is that of ATP-dependent Clp protease proteolytic subunit from Paracoccus denitrificans.